A 322-amino-acid chain; its full sequence is MAPGVGGYRQINKALNICAFEEYLESQQTHLSSLPNVEQISPRVIRVLGQNPGKFTLQGTNTYIVGTGTKRLIIDTGQGIPEWADLIRETLSGGDFLLSDVLLTHWHGDHTGGVPDLLRMYPDLTPRIFKNTPDRTQQPIVDGQIFKVEGATVRAVHSPGHSHDHMCFVLEEEQAMFTGDNVLGSGTAAIEHLSTWMVTLKQMQSHGCKLGYPAHGAVITDLQSKIGSELAGKLRRERQALQALRQASRNGSGGPGKGRLTVKELVAAVHGDRIDDGIRVLALEPFMDEVLRKLAEDGAVGFDMRGVLKNAIPDIKARKRFR.

Zn(2+) is bound by residues His-105, His-107, Asp-109, and His-110. Residue Asp-109 is the Proton donor/acceptor of the active site.

It belongs to the metallo-beta-lactamase superfamily. The cofactor is Zn(2+).

It carries out the reaction atrochrysone carboxyl-[ACP] + H2O = atrochrysone carboxylate + holo-[ACP] + H(+). It functions in the pathway secondary metabolite biosynthesis. In terms of biological role, atrochrysone carboxyl ACP thioesterase; part of the gene cluster that mediates the biosynthesis of the tetrahydroxanthone dimer neosartorin, which exhibits antibacterial activity. The two different monomeric units appear to be synthesized by the same set of enzymes, among which the Baeyer-Villiger monooxygenase nsrF is the key enzyme for the divergence of the biosynthetic routes. The pathway begins with the synthesis of atrochrysone thioester by the polyketide synthase nsrB. The atrochrysone carboxyl ACP thioesterase nsrC then breaks the thioester bond and releases the atrochrysone carboxylic acid from AacuL. Atrochrysone carboxylic acid is decarboxylated by the decarboxylase nsrE, and oxidized by the anthrone oxygenase nsrD to yield emodin. Emodin is then reduced to emodin hydroquinone by the oxidoreductase nsrR. A-ring reduction by the short chain dehydrogenase nsrJ, dehydration by the scytalone dehydratase-like protein nsrI and probable spontaneous re-oxidation, results in overall deoxygenation to chrysophanol. The Baeyer-Villiger monooxygenase nsrF accepts chrysophanol as a substrate to insert one oxygen atom at two different positions to yield the precursors of both monomric units. NsrF is promiscuous/flexible in interacting with the 2 (non methylated and methylated) aromatic rings of chrysophanol, thus diverging the biosynthetic pathway at this point. After the hydrolysis of the lactones, methylesterification by the methyltransferase nsrG yields respectively moniliphenone and 2,2',6'-trihydroxy-4-methyl-6-methoxya-cyldiphenylmethanone. The next steps are the hydroxylation by the FAD-dependent monooxygenase nsrK, followed by isomerization by the monooxygenase nsrQ. The short chain dehydrogenase/reductase nsrO then catalyzes the C-5 ketoreduction to give the xanthone skeleton of blennolide C and 5-acetylblennolide A. The acetyltransferase nsrL has a strict substrate specificity and uses only blennolide A but not blennolide C to yield 5-acetylblennolide A as the single-acetylated product. In the final step of the biosynthesis, the heterodimerization of the 2 xanthones, blennolide C and 5-acetylblennolide A, is catalyzed by the cytochrome P450 monooxygenase nsrP. NsrP can utilize at least three different xanthones as its substrates to perform the dimerization reaction. This Aspergillus novofumigatus (strain IBT 16806) protein is Atrochrysone carboxyl ACP thioesterase nsrC.